Consider the following 324-residue polypeptide: Fructose-1,6-bisphosphatase class 1 (324 aa).

E88, D107, L109, and D110 together coordinate Mg(2+). Residues 110-113, N199, and K265 contribute to the substrate site; that span reads DGSS. E271 is a Mg(2+) binding site.

This sequence belongs to the FBPase class 1 family. As to quaternary structure, homotetramer. The cofactor is Mg(2+).

Its subcellular location is the cytoplasm. The catalysed reaction is beta-D-fructose 1,6-bisphosphate + H2O = beta-D-fructose 6-phosphate + phosphate. It functions in the pathway carbohydrate biosynthesis; gluconeogenesis. In Neisseria meningitidis serogroup C (strain 053442), this protein is Fructose-1,6-bisphosphatase class 1.